The primary structure comprises 487 residues: Ribosome biogenesis protein YTM1 (487 aa).

The tract at residues 13 to 95 (VKVTFTTNEA…ETNLTLQYVR (83 aa)) is ubiquitin-like (UBL) domain. WD repeat units follow at residues 122–161 (SPAG…LVTA), 168–206 (GHSA…ASGQ), 217–256 (GHRA…SPEA), 379–419 (GHTN…PASG), and 451–487 (GEGA…VVRE). The interval 253–277 (SPEADASLLPNAHTSKRRKVASSVT) is disordered.

It belongs to the WD repeat WDR12/YTM1 family. As to quaternary structure, component of the NOP7 complex, composed of ERB1, NOP7 and YTM1. The complex is held together by ERB1, which interacts with NOP7 via its N-terminal domain and with YTM1 via a high-affinity interaction between the seven-bladed beta-propeller domains of the 2 proteins. The NOP7 complex associates with the 66S pre-ribosome. Interacts (via UBL domain) with MDN1 (via VWFA/MIDAS domain).

Its subcellular location is the nucleus. The protein localises to the nucleolus. It localises to the nucleoplasm. Component of the NOP7 complex, which is required for maturation of the 25S and 5.8S ribosomal RNAs and formation of the 60S ribosome. The chain is Ribosome biogenesis protein YTM1 from Podospora anserina (strain S / ATCC MYA-4624 / DSM 980 / FGSC 10383) (Pleurage anserina).